A 492-amino-acid chain; its full sequence is PTS system N-acetylmuramic acid-specific EIIBC component (492 aa).

Positions 1 to 89 constitute a PTS EIIB type-1 domain; it reads MAKINQSVIA…NELLNSSTPT (89 aa). C28 serves as the catalytic Phosphocysteine intermediate; for EIIB activity. One can recognise a PTS EIIC type-1 domain in the interval 123–487; that stretch reads TKFATIFTPL…KKIEVLKADV (365 aa). 10 consecutive transmembrane segments (helical) span residues 125 to 145, 167 to 187, 193 to 213, 227 to 247, 265 to 285, 311 to 331, 344 to 364, 378 to 398, 403 to 423, and 450 to 470; these read FATI…LLGF, IIGY…ILIG, AFGG…LSYN, FFGY…AAIL, MILT…IFIM, ILAG…FVPV, LFPI…ALYV, GAII…VTLP, FITA…IAYL, and IFVG…SGFV.

It is found in the cell inner membrane. The catalysed reaction is N-acetyl-beta-D-muramate(out) + N(pros)-phospho-L-histidyl-[protein] = N-acetyl-beta-D-muramate 6-phosphate(in) + L-histidyl-[protein]. In terms of biological role, the phosphoenolpyruvate-dependent sugar phosphotransferase system (sugar PTS), a major carbohydrate active transport system, catalyzes the phosphorylation of incoming sugar substrates concomitantly with their translocation across the cell membrane. This system is involved in N-acetylmuramic acid (MurNAc) transport, yielding cytoplasmic MurNAc-6-P. Is also able to take up anhydro-N-acetylmuramic acid (anhMurNAc), but cannot phosphorylate the carbon 6, probably because of the 1,6-anhydro ring. The polypeptide is PTS system N-acetylmuramic acid-specific EIIBC component (murP) (Photorhabdus laumondii subsp. laumondii (strain DSM 15139 / CIP 105565 / TT01) (Photorhabdus luminescens subsp. laumondii)).